Here is a 58-residue protein sequence, read N- to C-terminus: UPF0339 protein MA_3316 (58 aa).

The protein belongs to the UPF0339 family.

This is UPF0339 protein MA_3316 from Methanosarcina acetivorans (strain ATCC 35395 / DSM 2834 / JCM 12185 / C2A).